Here is a 621-residue protein sequence, read N- to C-terminus: MNEEVREILGGLDFESTKDVAVPERLIDQVIGQDHAVEAIKKAAVQKRHVMLIGSPGTGKSMLAKAMAELLPKEELEDILVYPNPQDPNQPKIRLVPAGKGREIVEAYKEEAMKKAQARNFLIFTLVFLVIGYTVLTNPGNLIWGIIAAVLILMMSRYFIPREDRNVPKLLVDNSDKVTAPFEDATGAHAGALFGDVRHDPFQSGGLETPAHERVEAGAIHRAHKGVLYIDEINTLTIESQQKLLTALQDKKFPITGQSERSSGAMVRTEPVPCDFILVAAGNLDALMGMHPALRSRIEGYGYEVYMNDTMPDTPENRQKLVRFVAQEVVKDGKIPHFDKYAVAEIIKEARRRAGRRNHLTLRLRELGGLVRTAGDIAKSEGSDIVRLEHVLKAKKIAKTIEEQLADKYIERRKDYKLFITEGYEVGRVNGLAVIGESAGIVLPIIAEVTPSMSKSEGRVIATGRLQEIAREAVMNVSAIIKKYTGRDISNMDVHIQFVGTYEGVEGDSASISIATAVISAIEGIPVDQSVAMTGSLSVKGEVLPVGGVTQKIEAAIQAGLKKVIIPKDNIDDVLLDAEHEGKIEVIPVSRINEVLEHVLEDGKKKNRLMSKFKELELAAV.

Residues M1–Q117 lie on the Cytoplasmic side of the membrane. G54–S61 contributes to the ATP binding site. A helical membrane pass occupies residues A118–L136. At T137–N141 the chain is on the extracellular side. The chain crosses the membrane as a helical span at residues L142–I160. Residues P161 to V621 lie on the Cytoplasmic side of the membrane. One can recognise a Lon proteolytic domain in the interval G423–D602. Residues S509 and K552 contribute to the active site.

This sequence belongs to the peptidase S16 family. Archaeal LonB subfamily. As to quaternary structure, homohexamer. Organized in a ring with a central cavity.

The protein resides in the cell membrane. ATP-dependent serine protease that mediates the selective degradation of mutant and abnormal proteins as well as certain short-lived regulatory proteins. Degrades polypeptides processively. The polypeptide is Archaeal Lon protease (Archaeoglobus fulgidus (strain ATCC 49558 / DSM 4304 / JCM 9628 / NBRC 100126 / VC-16)).